Here is a 332-residue protein sequence, read N- to C-terminus: Phosphate acyltransferase (332 aa).

This sequence belongs to the PlsX family. In terms of assembly, homodimer. Probably interacts with PlsY.

It localises to the cytoplasm. The enzyme catalyses a fatty acyl-[ACP] + phosphate = an acyl phosphate + holo-[ACP]. The protein operates within lipid metabolism; phospholipid metabolism. Catalyzes the reversible formation of acyl-phosphate (acyl-PO(4)) from acyl-[acyl-carrier-protein] (acyl-ACP). This enzyme utilizes acyl-ACP as fatty acyl donor, but not acyl-CoA. This is Phosphate acyltransferase from Sulfurimonas denitrificans (strain ATCC 33889 / DSM 1251) (Thiomicrospira denitrificans (strain ATCC 33889 / DSM 1251)).